The primary structure comprises 181 residues: Peptide deformylase (181 aa).

Fe cation contacts are provided by Cys-99 and His-141. The active site involves Glu-142. Residue His-145 participates in Fe cation binding.

It belongs to the polypeptide deformylase family. Fe(2+) is required as a cofactor.

It carries out the reaction N-terminal N-formyl-L-methionyl-[peptide] + H2O = N-terminal L-methionyl-[peptide] + formate. In terms of biological role, removes the formyl group from the N-terminal Met of newly synthesized proteins. Requires at least a dipeptide for an efficient rate of reaction. N-terminal L-methionine is a prerequisite for activity but the enzyme has broad specificity at other positions. This is Peptide deformylase from Chlamydia muridarum (strain MoPn / Nigg).